An 89-amino-acid polypeptide reads, in one-letter code: Small ribosomal subunit protein uS15 (89 aa).

It belongs to the universal ribosomal protein uS15 family. Part of the 30S ribosomal subunit. Forms a bridge to the 50S subunit in the 70S ribosome, contacting the 23S rRNA.

In terms of biological role, one of the primary rRNA binding proteins, it binds directly to 16S rRNA where it helps nucleate assembly of the platform of the 30S subunit by binding and bridging several RNA helices of the 16S rRNA. Functionally, forms an intersubunit bridge (bridge B4) with the 23S rRNA of the 50S subunit in the ribosome. The protein is Small ribosomal subunit protein uS15 of Nitratidesulfovibrio vulgaris (strain DP4) (Desulfovibrio vulgaris).